The primary structure comprises 314 residues: uncharacterized protein (314 aa).

The segment at 1–70 is disordered; that stretch reads MAGNSQRRGA…QGRHKKTDDT (70 aa). The span at 44-65 shows a compositional bias: basic residues; the sequence is RPHHPAGKRAAKAARQAQGRHK. S-adenosyl-L-methionine is bound by residues Gly265, Ile285, and Leu294.

This sequence belongs to the class IV-like SAM-binding methyltransferase superfamily. RNA methyltransferase TrmH family.

This is an uncharacterized protein from Mycolicibacterium gilvum (strain PYR-GCK) (Mycobacterium gilvum (strain PYR-GCK)).